Here is a 247-residue protein sequence, read N- to C-terminus: Protein ABHD14A (247 aa).

The helical; Signal-anchor for type II membrane protein transmembrane segment at 11 to 31 (AALLGLGLLLVFLLYMGLPGP) threads the bilayer. A glycan (N-linked (GlcNAc...) asparagine) is linked at Asn-43. Active-site charge relay system residues include Ser-147, Asp-198, and His-225.

It belongs to the AB hydrolase superfamily. ABHD14 family. As to expression, widely expressed. Higher expression is detected in brain, kidney, heart, testis, ovary and uterus.

It localises to the cytoplasm. Its subcellular location is the membrane. Its function is as follows. Possible role in granule neuron development. This chain is Protein ABHD14A, found in Mus musculus (Mouse).